A 1306-amino-acid chain; its full sequence is Signaling mucin MSB2 (1306 aa).

A signal peptide spans 1–21 (MQFPFACLLSTLVISGSLARA). Over 22–1185 (SPFDFIFGNG…VSTSSKSKKK (1164 aa)) the chain is Extracellular. N-linked (GlcNAc...) asparagine glycosylation is present at asparagine 30. Disordered stretches follow at residues 248–267 (SADF…LSAA), 519–539 (QAGG…SSST), 561–580 (YMAG…LSES), 665–685 (SSIS…SASS), and 709–849 (TSSS…SVSQ). Polar residues predominate over residues 519–528 (QAGGSSMTNP). Positions 529–539 (SSSTIVYSSST) are enriched in low complexity. 2 stretches are compositionally biased toward low complexity: residues 665–674 (SSISSEFSPS) and 709–831 (TSSS…TSSQ). 7 consecutive repeat copies span residues 698-714 (SQVS…SSSV), 715-731 (SQVS…SSSV), 732-748 (SQVS…SSSV), 749-765 (SQVS…SSSV), 766-782 (SQVS…SSSV), 783-799 (SQVS…RSSV), and 800-816 (SQVS…RSSV). A 7 X 17 AA tandem repeats region spans residues 698–816 (SQVSDTSVSY…VPSTSSRSSV (119 aa)). Residues asparagine 859, asparagine 885, asparagine 945, asparagine 1049, and asparagine 1088 are each glycosylated (N-linked (GlcNAc...) asparagine). A disordered region spans residues 1123–1158 (SNSGGSSDGSSSSNSNSGSSGSGSNSNSGVSSSSGN). An N-linked (GlcNAc...) asparagine glycan is attached at asparagine 1175. The chain crosses the membrane as a helical span at residues 1186 to 1206 (IIGLVIGVVVGGCLYILFMIF). The Cytoplasmic portion of the chain corresponds to 1207 to 1306 (AFKYIIRRRI…SQNSLGWNEV (100 aa)). Residues 1272–1291 (LTNNDSTPTRHNTSSSIPKI) form a disordered region. Serine 1300 carries the post-translational modification Phosphoserine.

The protein belongs to the HKR1/MSB2 family. In terms of assembly, interacts with CDC42 and SHO1. O-glycosylated in the Ser/Thr-rich regions.

It is found in the cell membrane. In terms of biological role, plasma membrane signaling mucin that promotes activation of the MAPK for the filamentous growth pathway. Partially redundant with the SHO1 osmosensing branch for the activation of STE11. In Saccharomyces cerevisiae (strain ATCC 204508 / S288c) (Baker's yeast), this protein is Signaling mucin MSB2 (MSB2).